The chain runs to 181 residues: MKIALFGGSFDPPHNGHNSVVLEALEKLDIDKLIIMPTYINPFKQSFSADEKQRFLWVKKLWGHLPKVEICDFETKQKRPVPSIESVKYLYKLYNPSKFYLLIGADHLEKLHLWHDFEKLNSLVEFVIANRNDIEIPKNFKDLKTDKKIASSFIRNTLNTNEVCEEIKDEVKKYYEKLQKN.

This sequence belongs to the NadD family.

It carries out the reaction nicotinate beta-D-ribonucleotide + ATP + H(+) = deamido-NAD(+) + diphosphate. It participates in cofactor biosynthesis; NAD(+) biosynthesis; deamido-NAD(+) from nicotinate D-ribonucleotide: step 1/1. Its function is as follows. Catalyzes the reversible adenylation of nicotinate mononucleotide (NaMN) to nicotinic acid adenine dinucleotide (NaAD). This Campylobacter jejuni subsp. jejuni serotype O:6 (strain 81116 / NCTC 11828) protein is Probable nicotinate-nucleotide adenylyltransferase.